Consider the following 34-residue polypeptide: Omega/M-ectatotoxin-Et1a subunit B (34 aa).

Cysteine 10 and cysteine 32 are joined by a disulfide.

It belongs to the ectatomin family. Ectatomin-Et subfamily. As to quaternary structure, heterodimer of an A and a B chain; disulfide-linked. As to expression, expressed by the venom gland.

It localises to the secreted. Its subcellular location is the target cell membrane. Its function is as follows. Algogenic for animals, human and insects. At high concentrations (0.5-1 uM), it acts as a pore-forming protein that forms nonselective cation channels both in cell and artificial membranes. It is weakly selective for cation over anions channel conductance is identical in both directions. At lower concentrations (1-10 nM), this heterodimer inhibits cardiac L-type calcium currents in isolated rat cardiac ventricular myocytes. The protein is Omega/M-ectatotoxin-Et1a subunit B of Ectatomma tuberculatum (Selva ant).